Reading from the N-terminus, the 458-residue chain is Phosphoglucosamine mutase (458 aa).

Ser108 serves as the catalytic Phosphoserine intermediate. Ser108, Asp247, Asp249, and Asp251 together coordinate Mg(2+). Ser108 carries the post-translational modification Phosphoserine.

It belongs to the phosphohexose mutase family. Mg(2+) is required as a cofactor. In terms of processing, activated by phosphorylation.

The enzyme catalyses alpha-D-glucosamine 1-phosphate = D-glucosamine 6-phosphate. Functionally, catalyzes the conversion of glucosamine-6-phosphate to glucosamine-1-phosphate. The sequence is that of Phosphoglucosamine mutase from Nitrosomonas europaea (strain ATCC 19718 / CIP 103999 / KCTC 2705 / NBRC 14298).